The chain runs to 223 residues: Deoxyribose-phosphate aldolase (223 aa).

Residue D92 is the Proton donor/acceptor of the active site. Residue K154 is the Schiff-base intermediate with acetaldehyde of the active site. K182 acts as the Proton donor/acceptor in catalysis.

It belongs to the DeoC/FbaB aldolase family. DeoC type 1 subfamily.

The protein resides in the cytoplasm. It catalyses the reaction 2-deoxy-D-ribose 5-phosphate = D-glyceraldehyde 3-phosphate + acetaldehyde. It functions in the pathway carbohydrate degradation; 2-deoxy-D-ribose 1-phosphate degradation; D-glyceraldehyde 3-phosphate and acetaldehyde from 2-deoxy-alpha-D-ribose 1-phosphate: step 2/2. Its function is as follows. Catalyzes a reversible aldol reaction between acetaldehyde and D-glyceraldehyde 3-phosphate to generate 2-deoxy-D-ribose 5-phosphate. This Haemophilus influenzae (strain PittEE) protein is Deoxyribose-phosphate aldolase.